We begin with the raw amino-acid sequence, 308 residues long: Sulfate adenylyltransferase subunit 2 (308 aa).

Belongs to the PAPS reductase family. CysD subfamily. In terms of assembly, heterodimer composed of CysD, the smaller subunit, and CysN.

The enzyme catalyses sulfate + ATP + H(+) = adenosine 5'-phosphosulfate + diphosphate. It functions in the pathway sulfur metabolism; hydrogen sulfide biosynthesis; sulfite from sulfate: step 1/3. Its function is as follows. With CysN forms the ATP sulfurylase (ATPS) that catalyzes the adenylation of sulfate producing adenosine 5'-phosphosulfate (APS) and diphosphate, the first enzymatic step in sulfur assimilation pathway. APS synthesis involves the formation of a high-energy phosphoric-sulfuric acid anhydride bond driven by GTP hydrolysis by CysN coupled to ATP hydrolysis by CysD. The chain is Sulfate adenylyltransferase subunit 2 from Chromobacterium violaceum (strain ATCC 12472 / DSM 30191 / JCM 1249 / CCUG 213 / NBRC 12614 / NCIMB 9131 / NCTC 9757 / MK).